The following is a 275-amino-acid chain: Biotin synthase (275 aa).

Residues 1–217 (MLCAICNVSS…DTAKTLPQCR (217 aa)) form the Radical SAM core domain. 3 residues coordinate [4Fe-4S] cluster: C13, C17, and C20. [2Fe-2S] cluster-binding residues include C57, C92, C150, and R217.

The protein belongs to the radical SAM superfamily. Biotin synthase family. In terms of assembly, homodimer. [4Fe-4S] cluster serves as cofactor. The cofactor is [2Fe-2S] cluster.

The enzyme catalyses (4R,5S)-dethiobiotin + (sulfur carrier)-SH + 2 reduced [2Fe-2S]-[ferredoxin] + 2 S-adenosyl-L-methionine = (sulfur carrier)-H + biotin + 2 5'-deoxyadenosine + 2 L-methionine + 2 oxidized [2Fe-2S]-[ferredoxin]. It functions in the pathway cofactor biosynthesis; biotin biosynthesis; biotin from 7,8-diaminononanoate: step 2/2. Functionally, catalyzes the conversion of dethiobiotin (DTB) to biotin by the insertion of a sulfur atom into dethiobiotin via a radical-based mechanism. The polypeptide is Biotin synthase (Campylobacter fetus subsp. fetus (strain 82-40)).